Reading from the N-terminus, the 200-residue chain is NADH-quinone oxidoreductase subunit C (200 aa).

Belongs to the complex I 30 kDa subunit family. In terms of assembly, NDH-1 is composed of 14 different subunits. Subunits NuoB, C, D, E, F, and G constitute the peripheral sector of the complex.

Its subcellular location is the cell inner membrane. It catalyses the reaction a quinone + NADH + 5 H(+)(in) = a quinol + NAD(+) + 4 H(+)(out). Its function is as follows. NDH-1 shuttles electrons from NADH, via FMN and iron-sulfur (Fe-S) centers, to quinones in the respiratory chain. The immediate electron acceptor for the enzyme in this species is believed to be ubiquinone. Couples the redox reaction to proton translocation (for every two electrons transferred, four hydrogen ions are translocated across the cytoplasmic membrane), and thus conserves the redox energy in a proton gradient. This is NADH-quinone oxidoreductase subunit C from Paraburkholderia xenovorans (strain LB400).